Reading from the N-terminus, the 97-residue chain is Class II hydrophobin 3 (97 aa).

The first 16 residues, 1-16 (MKFFAAAALFIAGVLA), serve as a signal peptide directing secretion. 4 disulfide bridges follow: Cys30–Cys79, Cys40–Cys70, Cys41–Cys53, and Cys80–Cys91.

It belongs to the cerato-ulmin hydrophobin family. In terms of assembly, homodimer. Homodimers further self-assemble to form highly ordered films at water-air interfaces through intermolecular interactions.

Its subcellular location is the secreted. The protein resides in the cell wall. Aerial growth, conidiation, and dispersal of filamentous fungi in the environment rely upon a capability of their secreting small amphipathic proteins called hydrophobins (HPBs) with low sequence identity. Class I can self-assemble into an outermost layer of rodlet bundles on aerial cell surfaces, conferring cellular hydrophobicity that supports fungal growth, development and dispersal; whereas Class II form highly ordered films at water-air interfaces through intermolecular interactions but contribute nothing to the rodlet structure. The polypeptide is Class II hydrophobin 3 (Trichoderma asperellum (strain ATCC 204424 / CBS 433.97 / NBRC 101777)).